Consider the following 238-residue polypeptide: uncharacterized protein (238 aa).

Belongs to the chlamydial CPn_0658/CT_538/TC_0825 family.

This is an uncharacterized protein from Chlamydia muridarum (strain MoPn / Nigg).